The sequence spans 511 residues: Early growth response protein 1 (511 aa).

Disordered stretches follow at residues 133–169 (ASIP…LSCS) and 291–312 (PSRM…RPYA). Residues 137–169 (SSTSQATHPSSSSTSSIPSSSSSSTSSASLSCS) are compositionally biased toward low complexity. C2H2-type zinc fingers lie at residues 311-335 (YACP…IRIH), 341-363 (FQCR…IRTH), and 369-391 (FACE…TKIH). A disordered region spans residues 384-406 (RKRHTKIHMRQKDKKAEKGATAA). Basic residues predominate over residues 386-396 (RHTKIHMRQKD).

Belongs to the EGR C2H2-type zinc-finger protein family. In terms of tissue distribution, detected in muscle and brain.

It localises to the nucleus. The protein localises to the cytoplasm. Transcriptional regulator. Recognizes and binds to the DNA sequence 5'-GCG(T/G)GGGCG-3'(EGR-site) in the promoter region of target genes. Binds double-stranded target DNA, irrespective of the cytosine methylation status. Regulates the transcription of numerous target genes, and thereby plays an important role in regulating the response to growth factors, DNA damage, and ischemia. Plays a role in the regulation of cell survival, proliferation and cell death. Mediates responses to ischemia and hypoxia; regulates the expression of proteins that are involved in inflammatory processes. Plays a role in regulating the expression of circadian clock genes. Plays a role in the organization of Muller glia cells in the inner and outer plexiform layers of the retina. The chain is Early growth response protein 1 (egr1) from Danio rerio (Zebrafish).